A 481-amino-acid polypeptide reads, in one-letter code: Amino acid permease 6 (481 aa).

At 1 to 36 (MEKKKSMFVEQSFPEHEIGDTNKNFDEDGRDKRTGT) the chain is on the cytoplasmic side. 2 helical membrane-spanning segments follow: residues 37–57 (WMTG…LSLA) and 58–78 (WAIA…FSFI). Residues 79–125 (TYFTSTMLADCYRSPDPVTGKRNYTYMEVVRSYLGGRKVQLCGLAQY) are Cytoplasmic-facing. A helical transmembrane segment spans residues 126–146 (GNLIGITIGYTITASISMVAV). The Extracellular portion of the chain corresponds to 147–167 (KRSNCFHKNGHNVKCATSNTP). A helical transmembrane segment spans residues 168–188 (FMIIFAIIQIILSQIPNFHNL). Topologically, residues 189–190 (SW) are cytoplasmic. The helical transmembrane segment at 191 to 211 (LSILAAVMSFCYASIGVGLSI) threads the bilayer. At 212–242 (AKAAGGGEHVRTTLTGVTVGIDVSGAEKIWR) the chain is on the extracellular side. The helical transmembrane segment at 243 to 263 (TFQAIGDIAFAYAYSTVLIEI) threads the bilayer. At 264-283 (QDTLKAGPPSENKAMKRASL) the chain is on the cytoplasmic side. A helical transmembrane segment spans residues 284–304 (VGVSTTTFFYMLCGCVGYAAF). Topologically, residues 305–321 (GNDAPGNFLTGFGFYEP) are extracellular. Residues 322 to 342 (FWLIDFANVCIAVHLIGAYQV) traverse the membrane as a helical segment. The Cytoplasmic segment spans residues 343 to 385 (FCQPIFQFVESQSAKRWPDNKFITGEYKIHVPCCGDFSINFLR). The chain crosses the membrane as a helical span at residues 386–405 (LVWRTSYVVVTAVVAMIFPF). The Extracellular portion of the chain corresponds to 406 to 408 (FND). A helical transmembrane segment spans residues 409–427 (FLGLIGAASFWPLTVYFPI). Residues 428–447 (EMHIAQKKIPKFSFTWTWLK) lie on the Cytoplasmic side of the membrane. Residues 448-468 (ILSWTCFIVSLVAAAGSVQGL) form a helical membrane-spanning segment. Topologically, residues 469–481 (IQSLKDFKPFQAP) are extracellular.

The protein belongs to the amino acid/polyamine transporter 2 family. Amino acid/auxin permease (AAAP) (TC 2.A.18.2) subfamily. As to expression, expressed in roots and leaves, and at lower levels in stems and flowers. Found in the xylem parenchyma.

It is found in the cell membrane. Its function is as follows. Amino acid-proton symporter. Stereospecific transporter with a broad specificity for tryptophan, proline, and neutral and acidic amino acids. Has an affinity for aspartate in a physiological range. Involved in the uptake of amino acids diffusing out of the xylem tracheids into the xylem parenchyma. This Arabidopsis thaliana (Mouse-ear cress) protein is Amino acid permease 6 (AAP6).